Consider the following 179-residue polypeptide: Inner membrane-spanning protein YciB (179 aa).

The next 5 membrane-spanning stretches (helical) occupy residues 22 to 42, 50 to 70, 76 to 96, 121 to 141, and 149 to 169; these read IYAATTALIVATAIVLIYTWI, MALITFVLVAVFGGLTVFFHN, WKVTVIYGLFAGALLFSQWVM, IAWAVFFILCGLANIYIAFWM, and FKVFGLTALTLIFTLLSGVYI.

The protein belongs to the YciB family.

The protein localises to the cell inner membrane. Its function is as follows. Plays a role in cell envelope biogenesis, maintenance of cell envelope integrity and membrane homeostasis. The sequence is that of Inner membrane-spanning protein YciB from Enterobacter sp. (strain 638).